Here is a 207-residue protein sequence, read N- to C-terminus: N-(5'-phosphoribosyl)anthranilate isomerase (207 aa).

Belongs to the TrpF family.

It catalyses the reaction N-(5-phospho-beta-D-ribosyl)anthranilate = 1-(2-carboxyphenylamino)-1-deoxy-D-ribulose 5-phosphate. It functions in the pathway amino-acid biosynthesis; L-tryptophan biosynthesis; L-tryptophan from chorismate: step 3/5. The protein is N-(5'-phosphoribosyl)anthranilate isomerase of Petrotoga mobilis (strain DSM 10674 / SJ95).